A 474-amino-acid chain; its full sequence is HTH-type transcriptional regulator RamB (474 aa).

Residues 10-64 (VRQLRNERGFSQAALAQMLEISPSYLNQIEHDVRPLTVAVLLRITEVFGVDATFF) enclose the HTH cro/C1-type domain. The segment at residues 21-40 (QAALAQMLEISPSYLNQIEH) is a DNA-binding region (H-T-H motif).

The protein belongs to the short-chain fatty acyl-CoA assimilation regulator (ScfR) family.

Functionally, involved in the control of the glyoxylate cycle. RamB negatively controls the expression of icl expression during growth on acetate as the sole carbon source. The protein is HTH-type transcriptional regulator RamB of Mycobacterium tuberculosis (strain CDC 1551 / Oshkosh).